The sequence spans 112 residues: Small ribosomal subunit protein bS6 (112 aa).

Belongs to the bacterial ribosomal protein bS6 family.

Functionally, binds together with bS18 to 16S ribosomal RNA. The chain is Small ribosomal subunit protein bS6 from Chlamydia abortus (strain DSM 27085 / S26/3) (Chlamydophila abortus).